Reading from the N-terminus, the 434-residue chain is Anaerobic glycerol-3-phosphate dehydrogenase subunit B (434 aa).

It belongs to the anaerobic G-3-P dehydrogenase subunit B family. Composed of a catalytic GlpA/B dimer and of membrane bound GlpC. Requires FMN as cofactor.

It carries out the reaction a quinone + sn-glycerol 3-phosphate = dihydroxyacetone phosphate + a quinol. Its pathway is polyol metabolism; glycerol degradation via glycerol kinase pathway; glycerone phosphate from sn-glycerol 3-phosphate (anaerobic route): step 1/1. Conversion of glycerol 3-phosphate to dihydroxyacetone. Uses fumarate or nitrate as electron acceptor. This chain is Anaerobic glycerol-3-phosphate dehydrogenase subunit B, found in Histophilus somni (strain 2336) (Haemophilus somnus).